The sequence spans 227 residues: Tegument protein ORF55 (227 aa).

Cysteine 11 is lipidated: S-palmitoyl cysteine; by host. The segment at 183–227 is disordered; that stretch reads VTRQPEATLPKPPTEDPSVSAMHSSIPPRPSSTLEETTESAIGST. Residues 213–227 are compositionally biased toward polar residues; that stretch reads SSTLEETTESAIGST.

This sequence belongs to the herpesviridae UL51 family. In terms of assembly, oligomerizes. Interacts with ORF42; this interaction mediates ORF42 incorporation to virions. Interacts with vBCL2. Post-translationally, phosphorylated. Palmitoylation is necessary for Golgi localization.

It localises to the virion tegument. The protein resides in the host cytoplasm. The protein localises to the host Golgi apparatus. Its function is as follows. Plays several roles during the time course of infection, including egress of virus particles from the perinuclear space and secondary envelopment of cytoplasmic capsids that bud into specific trans-Golgi network (TGN)-derived membranes. This chain is Tegument protein ORF55 (ORF55), found in Homo sapiens (Human).